The following is a 1083-amino-acid chain: RecBCD enzyme subunit RecB (1083 aa).

Residues 1-323 (MKVFDLLGPL…QTLGTNWRSD (323 aa)) enclose the UvrD-like helicase ATP-binding domain. Residues 1 to 704 (MKVFDLLGPL…RGRAPGEAIV (704 aa)) are DNA-binding and helicase activity, interacts with RecC. Residue 21–28 (ASAGTGKT) coordinates ATP. In terms of domain architecture, UvrD-like helicase C-terminal spans 349 to 607 (VQARHQGHRL…QIMTVWVSKG (259 aa)). The segment at 765-1083 (AWKRTSYSGL…LSKLLDAEAP (319 aa)) is nuclease activity, interacts with RecD and RecA. Mg(2+)-binding residues include H830, D962, and D975. D975 acts as the For nuclease activity in catalysis.

This sequence belongs to the helicase family. UvrD subfamily. Heterotrimer of RecB, RecC and RecD. All subunits contribute to DNA-binding. Interacts with RecA. Mg(2+) serves as cofactor.

The catalysed reaction is Exonucleolytic cleavage (in the presence of ATP) in either 5'- to 3'- or 3'- to 5'-direction to yield 5'-phosphooligonucleotides.. It carries out the reaction Couples ATP hydrolysis with the unwinding of duplex DNA by translocating in the 3'-5' direction.. The enzyme catalyses ATP + H2O = ADP + phosphate + H(+). Functionally, a helicase/nuclease that prepares dsDNA breaks (DSB) for recombinational DNA repair. Binds to DSBs and unwinds DNA via a highly rapid and processive ATP-dependent bidirectional helicase activity. Holoenzyme degrades any linearized DNA that is unable to undergo homologous recombination. In the holoenzyme this subunit contributes DNA-dependent ATPase activity, exonuclease activity and 3'-5' helicase activity. Unlike the case in E.coli, suppresses RecA-dependent homologous recombination, is instead required for single-strand annealing pathway repair of DSB. The chain is RecBCD enzyme subunit RecB from Mycolicibacterium smegmatis (strain ATCC 700084 / mc(2)155) (Mycobacterium smegmatis).